Reading from the N-terminus, the 856-residue chain is Facilitated trehalose transporter Tret1 (856 aa).

2 disordered regions span residues 1 to 29 (MSGR…LKEK) and 62 to 202 (DPFL…KATS). At 1 to 389 (MSGRDNRGAG…LEVYRPTTNP (389 aa)) the chain is on the cytoplasmic side. A compositionally biased stretch (polar residues) spans 69–80 (VSPQRHPQTVRT). Positions 133-142 (EIREHRDRQQ) are enriched in basic and acidic residues. The span at 170-180 (GNSNTNSNKAA) shows a compositional bias: polar residues. Residues serine 247, serine 248, serine 249, serine 319, and serine 321 each carry the phosphoserine modification. The segment at 326–345 (LTSRQHFQQQRSISTDSRKS) is disordered. Residues 329 to 340 (RQHFQQQRSIST) are compositionally biased toward polar residues. Residues 390 to 410 (IFIWTQVIAALSVSLGSLVVG) traverse the membrane as a helical segment. Over 411-439 (FVSAYTSPALVSMSDPNITSFTVTKDAGS) the chain is Extracellular. An N-linked (GlcNAc...) asparagine glycan is attached at asparagine 427. Residues 440 to 460 (WVGGIMPLAGLVGGVAGGPLI) form a helical membrane-spanning segment. The Cytoplasmic segment spans residues 461–472 (EYMGRRNTILAT). A helical membrane pass occupies residues 473–493 (AVPFIVSSLLIACAVNVAMVL). Residues 494–496 (CGR) are Extracellular-facing. The helical transmembrane segment at 497–517 (FLAGFCVGIASLSLPVYLGET) threads the bilayer. Topologically, residues 518–527 (VQPEVRGTLG) are cytoplasmic. A helical transmembrane segment spans residues 528 to 548 (LLPTAFGNIGILVCFVAGSFM). An N-linked (GlcNAc...) asparagine glycan is attached at asparagine 549. Topologically, residues 549–551 (NWS) are extracellular. The chain crosses the membrane as a helical span at residues 552–572 (MLAFLGAALPVPFLILMFLIP). Residues 573-635 (ETPRWYVSRG…ELLKRNNLKP (63 aa)) lie on the Cytoplasmic side of the membrane. Residues 636–656 (LSISLGLMFFQQFSGINAVIF) form a helical membrane-spanning segment. Topologically, residues 657-672 (YTVQIFKDAGSTIDGN) are extracellular. A helical membrane pass occupies residues 673 to 693 (VCTIIVGVVNFVATFIGILLI). Topologically, residues 694–699 (DRAGRK) are cytoplasmic. Residues 700-720 (ILLYASDIAMVLTLFVLGGFF) traverse the membrane as a helical segment. At 721–739 (YCKAHGPDVSHLGWLPLTC) the chain is on the extracellular side. Residues 740-760 (FVVYILGFSVGFGPIPWLMMG) traverse the membrane as a helical segment. Residues 761–766 (EILPAK) are Cytoplasmic-facing. Residues 767–787 (IRGAAASVATSFNWTCTFVVT) form a helical membrane-spanning segment. The Extracellular segment spans residues 788-800 (KTFQDLVGSLGAH). Residues 801 to 821 (GAFWLFGAICFVGLFFVILYV) form a helical membrane-spanning segment. At 822-856 (PETQGKTLEDIERKMMGRVRRMSSVANIKPLSFNM) the chain is on the cytoplasmic side. 2 positions are modified to phosphoserine: serine 844 and serine 845.

It belongs to the major facilitator superfamily. Sugar transporter (TC 2.A.1.1) family. Trehalose transporter subfamily.

The protein resides in the cell membrane. Low-capacity facilitative transporter for trehalose. Does not transport maltose, sucrose or lactose. Mediates the bidirectional transfer of trehalose. Responsible for the transport of trehalose synthesized in the fat body and the incorporation of trehalose into other tissues that require a carbon source, thereby regulating trehalose levels in the hemolymph. This chain is Facilitated trehalose transporter Tret1, found in Drosophila yakuba (Fruit fly).